The primary structure comprises 355 residues: 3-dehydroquinate synthase (355 aa).

NAD(+)-binding positions include 98–102 (GVIGD), 122–123 (TT), K135, K144, and 162–165 (TLNT). Positions 177, 240, and 257 each coordinate Zn(2+).

Belongs to the sugar phosphate cyclases superfamily. Dehydroquinate synthase family. It depends on Co(2+) as a cofactor. The cofactor is Zn(2+). NAD(+) serves as cofactor.

It is found in the cytoplasm. It carries out the reaction 7-phospho-2-dehydro-3-deoxy-D-arabino-heptonate = 3-dehydroquinate + phosphate. Its pathway is metabolic intermediate biosynthesis; chorismate biosynthesis; chorismate from D-erythrose 4-phosphate and phosphoenolpyruvate: step 2/7. Catalyzes the conversion of 3-deoxy-D-arabino-heptulosonate 7-phosphate (DAHP) to dehydroquinate (DHQ). The polypeptide is 3-dehydroquinate synthase (Dictyoglomus thermophilum (strain ATCC 35947 / DSM 3960 / H-6-12)).